Here is a 208-residue protein sequence, read N- to C-terminus: Protein-L-isoaspartate O-methyltransferase (208 aa).

Residue Ser59 is part of the active site.

It belongs to the methyltransferase superfamily. L-isoaspartyl/D-aspartyl protein methyltransferase family.

It localises to the cytoplasm. It carries out the reaction [protein]-L-isoaspartate + S-adenosyl-L-methionine = [protein]-L-isoaspartate alpha-methyl ester + S-adenosyl-L-homocysteine. Its function is as follows. Catalyzes the methyl esterification of L-isoaspartyl residues in peptides and proteins that result from spontaneous decomposition of normal L-aspartyl and L-asparaginyl residues. It plays a role in the repair and/or degradation of damaged proteins. The sequence is that of Protein-L-isoaspartate O-methyltransferase from Aliivibrio fischeri (strain ATCC 700601 / ES114) (Vibrio fischeri).